A 466-amino-acid polypeptide reads, in one-letter code: Putative D-3-phosphoglycerate dehydrogenase (466 aa).

Positions 1–15 (MDIKGGRRGNVEDSL) are enriched in basic and acidic residues. Residues 1 to 26 (MDIKGGRRGNVEDSLNKLSLSPPDNN) form a disordered region. Residues 16–26 (NKLSLSPPDNN) show a composition bias toward polar residues. S87 is modified (phosphoserine). NAD(+)-binding positions include 205-206 (HI) and D225. S258 carries the post-translational modification Phosphoserine. Residues 282-284 (ASR) and D308 contribute to the NAD(+) site. Residue R284 is part of the active site. The active site involves E313. H344 functions as the Proton donor in the catalytic mechanism. An NAD(+)-binding site is contributed by 344–347 (HIGG). Residues 396 to 466 (RVLFVHRNVP…PCKINTRLLY (71 aa)) enclose the ACT domain.

Belongs to the D-isomer specific 2-hydroxyacid dehydrogenase family.

The enzyme catalyses (2R)-3-phosphoglycerate + NAD(+) = 3-phosphooxypyruvate + NADH + H(+). It catalyses the reaction (R)-2-hydroxyglutarate + NAD(+) = 2-oxoglutarate + NADH + H(+). It functions in the pathway amino-acid biosynthesis; L-serine biosynthesis; L-serine from 3-phospho-D-glycerate: step 1/3. Its function is as follows. Catalyzes the reversible oxidation of 3-phospho-D-glycerate to 3-phosphonooxypyruvate, the first step of the phosphorylated L-serine biosynthesis pathway. Also catalyzes the reversible oxidation of 2-hydroxyglutarate to 2-oxoglutarate. The sequence is that of Putative D-3-phosphoglycerate dehydrogenase from Schizosaccharomyces pombe (strain 972 / ATCC 24843) (Fission yeast).